Reading from the N-terminus, the 615-residue chain is Hypermethylated in cancer 2 protein (615 aa).

A BTB domain is found at 46-109 (CDVIIMVENS…IYTGKLLPSD (64 aa)). The segment at 144–167 (KPFGSGRAGSTGMGRPPRSQRLST) is disordered. Phosphoserine occurs at positions 166, 169, and 197. Disordered regions lie at residues 182–208 (RKGA…GSNQ) and 229–421 (GCSS…SGHA). The interval 246–250 (GLDLS) is binding to CtBP. The segment covering 280–296 (SPPAASAPPVANSASYS) has biased composition (low complexity). Residues 336 to 356 (KKEWGKKEPVAGSPFERREAG) are compositionally biased toward basic and acidic residues. A Phosphoserine modification is found at Ser-348. The span at 379-388 (ASGAGPSGPY) shows a compositional bias: low complexity. At Ser-412 the chain carries Phosphoserine. 5 consecutive C2H2-type zinc fingers follow at residues 442–469 (YVCI…EEEL), 505–532 (FKCS…LTRP), 533–560 (FPCN…GLKP), 561–588 (FACD…GEKP), and 589–615 (YECQ…TSPS).

This sequence belongs to the krueppel C2H2-type zinc-finger protein family. Hic subfamily. As to quaternary structure, self-associates. Interacts with HIC1. As to expression, highest levels in cerebellum.

Its subcellular location is the nucleus. Functionally, transcriptional repressor. In Homo sapiens (Human), this protein is Hypermethylated in cancer 2 protein (HIC2).